The primary structure comprises 882 residues: Valine--tRNA ligase (882 aa).

Positions 42-52 (PNVTGKLHLGH) match the 'HIGH' region motif. The 'KMSKS' region signature appears at 522-526 (KMSKS). Lys-525 provides a ligand contact to ATP. Residues 849-873 (KIEIEKKKYESYCKQYKKLLESKNN) adopt a coiled-coil conformation.

Belongs to the class-I aminoacyl-tRNA synthetase family. ValS type 1 subfamily. In terms of assembly, monomer.

The protein resides in the cytoplasm. The catalysed reaction is tRNA(Val) + L-valine + ATP = L-valyl-tRNA(Val) + AMP + diphosphate. Functionally, catalyzes the attachment of valine to tRNA(Val). As ValRS can inadvertently accommodate and process structurally similar amino acids such as threonine, to avoid such errors, it has a 'posttransfer' editing activity that hydrolyzes mischarged Thr-tRNA(Val) in a tRNA-dependent manner. This is Valine--tRNA ligase from Onion yellows phytoplasma (strain OY-M).